A 431-amino-acid chain; its full sequence is tRNA(Ile)-lysidine synthase (431 aa).

Residue 19–24 participates in ATP binding; it reads STGIDS.

This sequence belongs to the tRNA(Ile)-lysidine synthase family.

It localises to the cytoplasm. The catalysed reaction is cytidine(34) in tRNA(Ile2) + L-lysine + ATP = lysidine(34) in tRNA(Ile2) + AMP + diphosphate + H(+). Ligates lysine onto the cytidine present at position 34 of the AUA codon-specific tRNA(Ile) that contains the anticodon CAU, in an ATP-dependent manner. Cytidine is converted to lysidine, thus changing the amino acid specificity of the tRNA from methionine to isoleucine. In Staphylococcus aureus (strain MRSA252), this protein is tRNA(Ile)-lysidine synthase.